The following is a 567-amino-acid chain: Geranylgeranyl transferase type-2 subunit alpha (567 aa).

PFTA repeat units lie at residues Leu-44–Val-78, Leu-88–Glu-122, Asn-124–Val-158, Pro-159–Pro-193, Val-207–Pro-241, and Val-363–Pro-397. Phosphoserine is present on Ser-98. LRR repeat units lie at residues Glu-442–Leu-463, Leu-464–Arg-486, Cys-487–Pro-508, Arg-509–Thr-530, and Arg-534–Leu-555.

Belongs to the protein prenyltransferase subunit alpha family. As to quaternary structure, heterotrimer composed of RABGGTA, RABGGTB and CHM; within this trimer, RABGGTA and RABGGTB form the catalytic component B, while CHM (component A) mediates peptide substrate binding. The Rab GGTase dimer (RGGT) interacts with CHM (component A) prior to Rab protein binding; the association is stabilized by geranylgeranyl pyrophosphate (GGpp). The CHM:RGGT:Rab complex is destabilized by GGpp. Interacts with non-phosphorylated form of RAB8A; phosphorylation of RAB8A at 'Thr-72' disrupts this interaction.

It catalyses the reaction geranylgeranyl diphosphate + L-cysteinyl-[protein] = S-geranylgeranyl-L-cysteinyl-[protein] + diphosphate. Its activity is regulated as follows. The enzymatic reaction requires the aid of a Rab escort protein (also called component A), such as CHM. Functionally, catalyzes the transfer of a geranylgeranyl moiety from geranylgeranyl diphosphate to both cysteines of Rab proteins with the C-terminal sequence -XXCC, -XCXC and -CCXX, such as RAB1A, RAB3A, RAB5A and RAB7A. The sequence is that of Geranylgeranyl transferase type-2 subunit alpha (RABGGTA) from Bos taurus (Bovine).